Consider the following 400-residue polypeptide: Glutamyl-tRNA reductase (400 aa).

Residues 45–48, serine 103, 108–110, and glutamine 114 contribute to the substrate site; these read TCNR and EDQ. Cysteine 46 acts as the Nucleophile in catalysis. 179–184 is a binding site for NADP(+); sequence GYGEIG.

Belongs to the glutamyl-tRNA reductase family. As to quaternary structure, homodimer.

It catalyses the reaction (S)-4-amino-5-oxopentanoate + tRNA(Glu) + NADP(+) = L-glutamyl-tRNA(Glu) + NADPH + H(+). It participates in porphyrin-containing compound metabolism; protoporphyrin-IX biosynthesis; 5-aminolevulinate from L-glutamyl-tRNA(Glu): step 1/2. In terms of biological role, catalyzes the NADPH-dependent reduction of glutamyl-tRNA(Glu) to glutamate 1-semialdehyde (GSA). The polypeptide is Glutamyl-tRNA reductase (Clostridium perfringens (strain 13 / Type A)).